The primary structure comprises 1135 residues: DNA-directed RNA polymerase subunit beta' (1135 aa).

Positions 60, 62, 75, and 78 each coordinate Zn(2+). Residues aspartate 450, aspartate 452, and aspartate 454 each coordinate Mg(2+). Residues cysteine 795, cysteine 869, cysteine 876, and cysteine 879 each coordinate Zn(2+).

This sequence belongs to the RNA polymerase beta' chain family. As to quaternary structure, the RNAP catalytic core consists of 2 alpha, 1 beta, 1 beta' and 1 omega subunit. When a sigma factor is associated with the core the holoenzyme is formed, which can initiate transcription. Requires Mg(2+) as cofactor. It depends on Zn(2+) as a cofactor.

It catalyses the reaction RNA(n) + a ribonucleoside 5'-triphosphate = RNA(n+1) + diphosphate. DNA-dependent RNA polymerase catalyzes the transcription of DNA into RNA using the four ribonucleoside triphosphates as substrates. The chain is DNA-directed RNA polymerase subunit beta' from Clostridium tetani (strain Massachusetts / E88).